Here is a 264-residue protein sequence, read N- to C-terminus: Thymidylate synthase (264 aa).

Arg21 is a dUMP binding site. A (6R)-5,10-methylene-5,6,7,8-tetrahydrofolate-binding site is contributed by His51. Position 126–127 (126–127 (RR)) interacts with dUMP. Cys146 functions as the Nucleophile in the catalytic mechanism. DUMP is bound by residues 166 to 169 (RSCD), Asn177, and 207 to 209 (HLY). Asp169 is a binding site for (6R)-5,10-methylene-5,6,7,8-tetrahydrofolate. Ala263 lines the (6R)-5,10-methylene-5,6,7,8-tetrahydrofolate pocket.

Belongs to the thymidylate synthase family. Bacterial-type ThyA subfamily. As to quaternary structure, homodimer.

It is found in the cytoplasm. The catalysed reaction is dUMP + (6R)-5,10-methylene-5,6,7,8-tetrahydrofolate = 7,8-dihydrofolate + dTMP. It participates in pyrimidine metabolism; dTTP biosynthesis. In terms of biological role, catalyzes the reductive methylation of 2'-deoxyuridine-5'-monophosphate (dUMP) to 2'-deoxythymidine-5'-monophosphate (dTMP) while utilizing 5,10-methylenetetrahydrofolate (mTHF) as the methyl donor and reductant in the reaction, yielding dihydrofolate (DHF) as a by-product. This enzymatic reaction provides an intracellular de novo source of dTMP, an essential precursor for DNA biosynthesis. The chain is Thymidylate synthase from Shigella flexneri serotype 5b (strain 8401).